The chain runs to 131 residues: Small ribosomal subunit protein uS19 (131 aa).

The protein belongs to the universal ribosomal protein uS19 family.

Functionally, protein S19 forms a complex with S13 that binds strongly to the 16S ribosomal RNA. The protein is Small ribosomal subunit protein uS19 of Nitrosopumilus maritimus (strain SCM1).